Here is a 253-residue protein sequence, read N- to C-terminus: 5'-nucleotidase SurE (253 aa).

The a divalent metal cation site is built by D8, D9, S39, and N95.

This sequence belongs to the SurE nucleotidase family. Requires a divalent metal cation as cofactor.

The protein resides in the cytoplasm. It catalyses the reaction a ribonucleoside 5'-phosphate + H2O = a ribonucleoside + phosphate. In terms of biological role, nucleotidase that shows phosphatase activity on nucleoside 5'-monophosphates. The sequence is that of 5'-nucleotidase SurE from Clostridium beijerinckii (strain ATCC 51743 / NCIMB 8052) (Clostridium acetobutylicum).